The following is a 767-amino-acid chain: MGEICPRREDFDIDYILKNASLLEKVSLLAGYDFWHTAPLPRFNVPSVRVSDGPNGVRGTKFFDGVRAACLPCGTGLAATWDQSLLYDAGVLIGQECLAKGAHCWLVPTVCIQRSPLGGRGFESFAEDPYATGKLAAAYIRGAQSTGVISTIKHFAANDQEHERISVNAVMSERALREVHLLPFQIAIADSAPGAVMTCYNKVNGQHLSESKEMLDGLLRREWGWKGLIMSDWFGTYSTAEALNAGLGLEMPGTTRLRGPLLELAISSRKVSRATLDERARTVLEFVQRARKAEVSAVESTRDFPEDRRLNRKLAADSIVLLKNESGLLPLNPQTLTSVALIGPNMKTAAFCGGGSASLQPYYSTSPYQGITSQLPPGVEVLYETGATSYAFIPELEASEVRTPEGQPGLRMRFYRDPPSVQERRVLMGFSNPELDRLFYADIEAELIAPATGPFQFGLAVYGSASLFLNDQLIIDNTTVQRGGTFFFGKGTLEETATVDLVQGQSYQIKVQFASGPSSKLVKPGVVNFGGGAGRLGMVQVVDPERAIARAVEAAKRADITILGVGLTRDHESEGFDRSHMDLPPAVASLVTAVLDVAPDAILLTQSGTPFSMLPWADLVKTHLHAWFGGNELGNGIADVLFGVVNPSGKLPLSFPRRIEDTPTYLNFGSERGQVTYGEGIYVGYKLLRKSPTSCALSIRARFVVHLLCVLRFDGRHRVRYTECSKLGRRGRSGSSPAVYRGRSNNVVNRTSHQGAQRISKGGFAAR.

N19 is a glycosylation site (N-linked (GlcNAc...) asparagine). The active site involves D232. Residues N324, N477, and N749 are each glycosylated (N-linked (GlcNAc...) asparagine). One can recognise a PA14 domain in the interval 405–552 (EGQPGLRMRF…DPERAIARAV (148 aa)). Residues 727–767 (LGRRGRSGSSPAVYRGRSNNVVNRTSHQGAQRISKGGFAAR) are disordered. Over residues 743–757 (RSNNVVNRTSHQGAQ) the composition is skewed to polar residues.

It belongs to the glycosyl hydrolase 3 family.

It localises to the secreted. The enzyme catalyses Hydrolysis of terminal, non-reducing beta-D-glucosyl residues with release of beta-D-glucose.. Its pathway is glycan metabolism; cellulose degradation. Its function is as follows. Beta-glucosidases are one of a number of cellulolytic enzymes involved in the degradation of cellulosic biomass. Catalyzes the last step releasing glucose from the inhibitory cellobiose. This chain is Probable beta-glucosidase K (bglK), found in Aspergillus fumigatus (strain ATCC MYA-4609 / CBS 101355 / FGSC A1100 / Af293) (Neosartorya fumigata).